Here is a 112-residue protein sequence, read N- to C-terminus: Protein ORF1 (112 aa).

Positions 1-10 are enriched in low complexity; it reads MEGTDWSGWG. Residues 1–20 form a disordered region; sequence MEGTDWSGWGDDSDFPWPKG. A helical membrane pass occupies residues 51 to 71; sequence IAFVILIVSLFVLLLGVLLAC.

It is found in the host membrane. In Snake adenovirus serotype 1 (SnAdV-1), this protein is Protein ORF1.